The primary structure comprises 345 residues: Aspartate--ammonia ligase (345 aa).

It belongs to the class-II aminoacyl-tRNA synthetase family. AsnA subfamily.

Its subcellular location is the cytoplasm. The enzyme catalyses L-aspartate + NH4(+) + ATP = L-asparagine + AMP + diphosphate + H(+). It participates in amino-acid biosynthesis; L-asparagine biosynthesis; L-asparagine from L-aspartate (ammonia route): step 1/1. The protein is Aspartate--ammonia ligase of Bacteroides fragilis (strain ATCC 25285 / DSM 2151 / CCUG 4856 / JCM 11019 / LMG 10263 / NCTC 9343 / Onslow / VPI 2553 / EN-2).